A 344-amino-acid chain; its full sequence is F17d-G fimbrial adhesin (344 aa).

A signal peptide spans 1-22; it reads MTNFYKVFLAVFILVCCNISQA. A receptor-binding lectin domain region spans residues 23–199; it reads AVSFIGSTEN…SLNPFTLNDT (177 aa). A carbohydrate-binding positions include 65 to 66, 110 to 111, and 139 to 142; these read AN, DT, and STQG. Cys75 and Cys132 form a disulfide bridge. A fimbrillin-binding domain region spans residues 200-344; it reads VTSCRLLTPS…GISTFTFSYQ (145 aa). Residues 288 to 308 form a disordered region; that stretch reads LKFGPDSPVKGNENQWQLSTG. The segment covering 299 to 308 has biased composition (polar residues); the sequence is NENQWQLSTG.

Belongs to the fimbrial protein family.

Its subcellular location is the fimbrium. In terms of biological role, essential fimbrial adhesion factor that mediates binding to N-acetylglucosamine-containing receptors in the host intestinal microvilli, leading to colonization of the intestinal tissue, and diarrhea or septicemia. Also confers adhesiveness to laminin and basement membranes. This is F17d-G fimbrial adhesin (f17dG) from Escherichia coli.